The chain runs to 213 residues: Golgi SNAP receptor complex member 2 homolog memb-1 (213 aa).

The Cytoplasmic portion of the chain corresponds to 1-189 (MEALYQSTNF…QVIDRRVRED (189 aa)). The helical; Anchor for type IV membrane protein transmembrane segment at 190–210 (WILFVIGCIVCCIFMYAFYRF) threads the bilayer. Residues 211-213 (WRG) lie on the Vesicular side of the membrane.

Belongs to the GOSR2 family. As to quaternary structure, part of a unique SNARE complex.

Its subcellular location is the golgi apparatus. The protein localises to the cis-Golgi network membrane. It is found in the golgi apparatus membrane. The protein resides in the endoplasmic reticulum membrane. Involved in transport of proteins from the cis/medial-Golgi to the trans-Golgi network. This chain is Golgi SNAP receptor complex member 2 homolog memb-1, found in Caenorhabditis elegans.